Consider the following 252-residue polypeptide: Ubiquinone/menaquinone biosynthesis C-methyltransferase UbiE (252 aa).

Residues threonine 71, aspartate 100, 124–125 (DA), and serine 141 each bind S-adenosyl-L-methionine.

The protein belongs to the class I-like SAM-binding methyltransferase superfamily. MenG/UbiE family.

It catalyses the reaction a 2-demethylmenaquinol + S-adenosyl-L-methionine = a menaquinol + S-adenosyl-L-homocysteine + H(+). The enzyme catalyses a 2-methoxy-6-(all-trans-polyprenyl)benzene-1,4-diol + S-adenosyl-L-methionine = a 5-methoxy-2-methyl-3-(all-trans-polyprenyl)benzene-1,4-diol + S-adenosyl-L-homocysteine + H(+). The protein operates within quinol/quinone metabolism; menaquinone biosynthesis; menaquinol from 1,4-dihydroxy-2-naphthoate: step 2/2. It functions in the pathway cofactor biosynthesis; ubiquinone biosynthesis. Functionally, methyltransferase required for the conversion of demethylmenaquinol (DMKH2) to menaquinol (MKH2) and the conversion of 2-polyprenyl-6-methoxy-1,4-benzoquinol (DDMQH2) to 2-polyprenyl-3-methyl-6-methoxy-1,4-benzoquinol (DMQH2). In Caulobacter vibrioides (strain ATCC 19089 / CIP 103742 / CB 15) (Caulobacter crescentus), this protein is Ubiquinone/menaquinone biosynthesis C-methyltransferase UbiE.